Here is a 69-residue protein sequence, read N- to C-terminus: Cytochrome c oxidase subunit 8A, mitochondrial (69 aa).

The transit peptide at 1 to 25 (MSVLTSLLLRGLTGSARWLPVPRAK) directs the protein to the mitochondrion. An SIFI-degron motif is present at residues 2-19 (SVLTSLLLRGLTGSARWL). The Mitochondrial matrix segment spans residues 26 to 36 (VHSMPPEVELG). The chain crosses the membrane as a helical span at residues 37 to 60 (IMEKAIGLTSCFVSLFLPAGWILS). The Mitochondrial intermembrane segment spans residues 61-69 (HLEDYKRPE).

This sequence belongs to the cytochrome c oxidase VIII family. In terms of assembly, component of the cytochrome c oxidase (complex IV, CIV), a multisubunit enzyme composed of 14 subunits. The complex is composed of a catalytic core of 3 subunits MT-CO1, MT-CO2 and MT-CO3, encoded in the mitochondrial DNA, and 11 supernumerary subunits COX4I, COX5A, COX5B, COX6A, COX6B, COX6C, COX7A, COX7B, COX7C, COX8 and NDUFA4, which are encoded in the nuclear genome. The complex exists as a monomer or a dimer and forms supercomplexes (SCs) in the inner mitochondrial membrane with NADH-ubiquinone oxidoreductase (complex I, CI) and ubiquinol-cytochrome c oxidoreductase (cytochrome b-c1 complex, complex III, CIII), resulting in different assemblies (supercomplex SCI(1)III(2)IV(1) and megacomplex MCI(2)III(2)IV(2)). Post-translationally, in response to mitochondrial stress, the precursor protein is ubiquitinated by the SIFI complex in the cytoplasm before mitochondrial import, leading to its degradation. Within the SIFI complex, UBR4 initiates ubiquitin chain that are further elongated or branched by KCMF1.

The protein localises to the mitochondrion inner membrane. It functions in the pathway energy metabolism; oxidative phosphorylation. Component of the cytochrome c oxidase, the last enzyme in the mitochondrial electron transport chain which drives oxidative phosphorylation. The respiratory chain contains 3 multisubunit complexes succinate dehydrogenase (complex II, CII), ubiquinol-cytochrome c oxidoreductase (cytochrome b-c1 complex, complex III, CIII) and cytochrome c oxidase (complex IV, CIV), that cooperate to transfer electrons derived from NADH and succinate to molecular oxygen, creating an electrochemical gradient over the inner membrane that drives transmembrane transport and the ATP synthase. Cytochrome c oxidase is the component of the respiratory chain that catalyzes the reduction of oxygen to water. Electrons originating from reduced cytochrome c in the intermembrane space (IMS) are transferred via the dinuclear copper A center (CU(A)) of subunit 2 and heme A of subunit 1 to the active site in subunit 1, a binuclear center (BNC) formed by heme A3 and copper B (CU(B)). The BNC reduces molecular oxygen to 2 water molecules using 4 electrons from cytochrome c in the IMS and 4 protons from the mitochondrial matrix. The sequence is that of Cytochrome c oxidase subunit 8A, mitochondrial (COX8A) from Macaca silenus (Lion-tailed macaque).